A 467-amino-acid polypeptide reads, in one-letter code: MDISALFLTLFAGSLFLYFLRCLISQRRFGSSKLPLPPGTMGWPYVGETFQLYSQDPNVFFQSKQKRYGSVFKTHVLGCPCVMISSPEAAKFVLVTKSHLFKPTFPASKERMLGKQAIFFHQGDYHAKLRKLVLRAFMPESIRNMVPDIESIAQDSLRSWEGTMINTYQEMKTYTFNVALLSIFGKDEVLYREDLKRCYYILEKGYNSMPVNLPGTLFHKSMKARKELSQILARILSERRQNGSSHNDLLGSFMGDKEELTDEQIADNIIGVIFAARDTTASVMSWILKYLAENPNVLEAVTEEQMAIRKDKEEGESLTWGDTKKMPLTSRVIQETLRVASILSFTFREAVEDVEYEGYLIPKGWKVLPLFRNIHHSADIFSNPGKFDPSRFEVAPKPNTFMPFGNGTHSCPGNELAKLEMSIMIHHLTTKYSWSIVGASDGIQYGPFALPQNGLPIVLARKPEIEV.

A helical transmembrane segment spans residues 5-24; the sequence is ALFLTLFAGSLFLYFLRCLI. A heme-binding site is contributed by Cys411.

The protein belongs to the cytochrome P450 family. Heme serves as cofactor. As to expression, mainly expressed in flowers, siliques, roots and stems. Lower expression in rosette leaves and dry seeds. Expressed in vascular tissues of embryo during the seed development.

The protein localises to the membrane. It catalyses the reaction 2-cis-(+)-abscisate + reduced [NADPH--hemoprotein reductase] + O2 = (+)-8'-hydroxyabscisate + oxidized [NADPH--hemoprotein reductase] + H2O + H(+). The protein operates within plant hormone degradation; abscisic acid degradation. In terms of biological role, involved in the oxidative degradation of abscisic acid. Plays an important role in determining abscisic acid levels in dry seeds and in the control of postgermination growth. This Arabidopsis thaliana (Mouse-ear cress) protein is Abscisic acid 8'-hydroxylase 1 (CYP707A1).